The following is a 348-amino-acid chain: NADH-ubiquinone oxidoreductase chain 2 (348 aa).

9 helical membrane-spanning segments follow: residues Met1 to Ala21, Phe60 to Leu80, Thr96 to Pro116, Asn149 to Leu169, Ile177 to Gln194, Thr198 to Leu220, Ile238 to Gly258, Asp273 to Leu293, and Met328 to Ile348.

This sequence belongs to the complex I subunit 2 family.

It localises to the mitochondrion inner membrane. The catalysed reaction is a ubiquinone + NADH + 5 H(+)(in) = a ubiquinol + NAD(+) + 4 H(+)(out). Functionally, core subunit of the mitochondrial membrane respiratory chain NADH dehydrogenase (Complex I) that is believed to belong to the minimal assembly required for catalysis. Complex I functions in the transfer of electrons from NADH to the respiratory chain. The immediate electron acceptor for the enzyme is believed to be ubiquinone. This chain is NADH-ubiquinone oxidoreductase chain 2 (MT-ND2), found in Tetraodon nigroviridis (Spotted green pufferfish).